The following is a 130-amino-acid chain: Histone H2A type 2-A (130 aa).

The tract at residues 1-22 (MSGRGKQGGKARAKAKSRSSRA) is disordered. Position 2 is an N-acetylserine (Ser2). At Ser2 the chain carries Phosphoserine; by RPS6KA5. Residue Arg4 is modified to Citrulline; alternate. The residue at position 4 (Arg4) is a Symmetric dimethylarginine; by PRMT5; alternate. 2 positions are modified to N6-(2-hydroxyisobutyryl)lysine; alternate: Lys6 and Lys10. Lys6 bears the N6-(beta-hydroxybutyryl)lysine; alternate mark. Lys6 carries the post-translational modification N6-acetyllysine; alternate. Residues 7-19 (QGGKARAKAKSRS) are compositionally biased toward basic residues. Lys10 is modified (N6-lactoyllysine; alternate). An N6-succinyllysine; alternate modification is found at Lys10. Residues Lys14 and Lys16 each participate in a glycyl lysine isopeptide (Lys-Gly) (interchain with G-Cter in ubiquitin) cross-link. Position 37 is an N6-(2-hydroxyisobutyryl)lysine; alternate (Lys37). N6-(beta-hydroxybutyryl)lysine; alternate is present on Lys37. An N6-crotonyllysine; alternate modification is found at Lys37. An N6-(2-hydroxyisobutyryl)lysine mark is found at Lys75 and Lys76. N6-(2-hydroxyisobutyryl)lysine; alternate is present on Lys96. N6-succinyllysine; alternate is present on Lys96. N6-glutaryllysine; alternate is present on Lys96. Residue Lys100 is modified to N6-glutaryllysine. Position 105 is an N5-methylglutamine (Gln105). Lys119 is modified (N6-(2-hydroxyisobutyryl)lysine; alternate). N6-crotonyllysine; alternate occurs at positions 119 and 120. 2 positions are modified to N6-glutaryllysine; alternate: Lys119 and Lys120. At Lys120 the chain carries N6-(beta-hydroxybutyryl)lysine; alternate. A Glycyl lysine isopeptide (Lys-Gly) (interchain with G-Cter in ubiquitin); alternate cross-link involves residue Lys120. Phosphothreonine; by DCAF1 is present on Thr121. Lys126 bears the N6-(beta-hydroxybutyryl)lysine; alternate mark. Position 126 is an N6-crotonyllysine; alternate (Lys126). The residue at position 126 (Lys126) is an N6-glutaryllysine; alternate.

This sequence belongs to the histone H2A family. The nucleosome is a histone octamer containing two molecules each of H2A, H2B, H3 and H4 assembled in one H3-H4 heterotetramer and two H2A-H2B heterodimers. The octamer wraps approximately 147 bp of DNA. Post-translationally, deiminated on Arg-4 in granulocytes upon calcium entry. Monoubiquitination of Lys-120 (H2AK119Ub) by RING1, TRIM37 and RNF2/RING2 complex gives a specific tag for epigenetic transcriptional repression and participates in X chromosome inactivation of female mammals. It is involved in the initiation of both imprinted and random X inactivation. Ubiquitinated H2A is enriched in inactive X chromosome chromatin. Ubiquitination of H2A functions downstream of methylation of 'Lys-27' of histone H3 (H3K27me). H2AK119Ub by RNF2/RING2 can also be induced by ultraviolet and may be involved in DNA repair. Following DNA double-strand breaks (DSBs), it is ubiquitinated through 'Lys-63' linkage of ubiquitin moieties by the E2 ligase UBE2N and the E3 ligases RNF8 and RNF168, leading to the recruitment of repair proteins to sites of DNA damage. Ubiquitination at Lys-14 and Lys-16 (H2AK13Ub and H2AK15Ub, respectively) in response to DNA damage is initiated by RNF168 that mediates monoubiquitination at these 2 sites, and 'Lys-63'-linked ubiquitin are then conjugated to monoubiquitin; RNF8 is able to extend 'Lys-63'-linked ubiquitin chains in vitro. H2AK119Ub and ionizing radiation-induced 'Lys-63'-linked ubiquitination (H2AK13Ub and H2AK15Ub) are distinct events. In terms of processing, phosphorylation on Ser-2 (H2AS1ph) is enhanced during mitosis. Phosphorylation on Ser-2 by RPS6KA5/MSK1 directly represses transcription. Acetylation of H3 inhibits Ser-2 phosphorylation by RPS6KA5/MSK1. Phosphorylation at Thr-121 (H2AT120ph) by DCAF1 is present in the regulatory region of many tumor suppresor genes and down-regulates their transcription. Post-translationally, symmetric dimethylation on Arg-4 by the PRDM1/PRMT5 complex may play a crucial role in the germ-cell lineage. Glutamine methylation at Gln-105 (H2AQ104me) by FBL is specifically dedicated to polymerase I. It is present at 35S ribosomal DNA locus and impairs binding of the FACT complex. In terms of processing, crotonylation (Kcr) is specifically present in male germ cells and marks testis-specific genes in post-meiotic cells, including X-linked genes that escape sex chromosome inactivation in haploid cells. Crotonylation marks active promoters and enhancers and confers resistance to transcriptional repressors. It is also associated with post-meiotically activated genes on autosomes. Post-translationally, hydroxybutyrylation of histones is induced by starvation. Lactylated in macrophages by EP300/P300 by using lactoyl-CoA directly derived from endogenous or exogenous lactate, leading to stimulates gene transcription.

It localises to the nucleus. The protein resides in the chromosome. In terms of biological role, core component of nucleosome. Nucleosomes wrap and compact DNA into chromatin, limiting DNA accessibility to the cellular machineries which require DNA as a template. Histones thereby play a central role in transcription regulation, DNA repair, DNA replication and chromosomal stability. DNA accessibility is regulated via a complex set of post-translational modifications of histones, also called histone code, and nucleosome remodeling. This is Histone H2A type 2-A (Hist2h2aa1) from Mus musculus (Mouse).